A 593-amino-acid polypeptide reads, in one-letter code: Arginine--tRNA ligase (593 aa).

Positions 138–148 (ANPTGPLHVGH) match the 'HIGH' region motif.

This sequence belongs to the class-I aminoacyl-tRNA synthetase family. As to quaternary structure, monomer.

It localises to the cytoplasm. The enzyme catalyses tRNA(Arg) + L-arginine + ATP = L-arginyl-tRNA(Arg) + AMP + diphosphate. The chain is Arginine--tRNA ligase from Burkholderia ambifaria (strain ATCC BAA-244 / DSM 16087 / CCUG 44356 / LMG 19182 / AMMD) (Burkholderia cepacia (strain AMMD)).